The chain runs to 861 residues: DNA mismatch repair protein MutS (861 aa).

G613–S620 is an ATP binding site.

Belongs to the DNA mismatch repair MutS family.

Its function is as follows. This protein is involved in the repair of mismatches in DNA. It is possible that it carries out the mismatch recognition step. This protein has a weak ATPase activity. In Dichelobacter nodosus (strain VCS1703A), this protein is DNA mismatch repair protein MutS.